Here is a 255-residue protein sequence, read N- to C-terminus: 4-hydroxy-tetrahydrodipicolinate reductase (255 aa).

NAD(+)-binding positions include 9–14 (GYRGKM), 89–91 (GTT), and 115–118 (APNF). The active-site Proton donor/acceptor is His145. Residue His146 coordinates (S)-2,3,4,5-tetrahydrodipicolinate. Lys149 serves as the catalytic Proton donor. 155-156 (GT) contributes to the (S)-2,3,4,5-tetrahydrodipicolinate binding site.

It belongs to the DapB family.

The protein resides in the cytoplasm. The enzyme catalyses (S)-2,3,4,5-tetrahydrodipicolinate + NAD(+) + H2O = (2S,4S)-4-hydroxy-2,3,4,5-tetrahydrodipicolinate + NADH + H(+). It catalyses the reaction (S)-2,3,4,5-tetrahydrodipicolinate + NADP(+) + H2O = (2S,4S)-4-hydroxy-2,3,4,5-tetrahydrodipicolinate + NADPH + H(+). The protein operates within amino-acid biosynthesis; L-lysine biosynthesis via DAP pathway; (S)-tetrahydrodipicolinate from L-aspartate: step 4/4. In terms of biological role, catalyzes the conversion of 4-hydroxy-tetrahydrodipicolinate (HTPA) to tetrahydrodipicolinate. The chain is 4-hydroxy-tetrahydrodipicolinate reductase from Streptococcus uberis (strain ATCC BAA-854 / 0140J).